We begin with the raw amino-acid sequence, 65 residues long: MKIAEIKEMSTNDLVERVEAEVVNYNQMVINHSISPLENPAQIKQLRRTIARMRTELRQRELNNK.

It belongs to the universal ribosomal protein uL29 family.

The polypeptide is Large ribosomal subunit protein uL29 (Bacteroides fragilis (strain ATCC 25285 / DSM 2151 / CCUG 4856 / JCM 11019 / LMG 10263 / NCTC 9343 / Onslow / VPI 2553 / EN-2)).